Consider the following 471-residue polypeptide: Glutamate--tRNA ligase (471 aa).

Positions 9–19 match the 'HIGH' region motif; sequence PSPTGYLHVGG. Zn(2+) is bound by residues cysteine 98, cysteine 100, cysteine 125, and histidine 127. Positions 237 to 241 match the 'KMSKS' region motif; the sequence is KLSKR. Lysine 240 contacts ATP.

It belongs to the class-I aminoacyl-tRNA synthetase family. Glutamate--tRNA ligase type 1 subfamily. Monomer. It depends on Zn(2+) as a cofactor.

It localises to the cytoplasm. It carries out the reaction tRNA(Glu) + L-glutamate + ATP = L-glutamyl-tRNA(Glu) + AMP + diphosphate. Catalyzes the attachment of glutamate to tRNA(Glu) in a two-step reaction: glutamate is first activated by ATP to form Glu-AMP and then transferred to the acceptor end of tRNA(Glu). The sequence is that of Glutamate--tRNA ligase from Salmonella schwarzengrund (strain CVM19633).